The primary structure comprises 209 residues: PRA1 family protein E (209 aa).

Residues 1 to 20 form a disordered region; the sequence is MNQKPPPYGYGGAGGGGVGP. The span at 9–19 shows a compositional bias: gly residues; the sequence is GYGGAGGGGVG. 3 consecutive transmembrane segments (helical) span residues 90–110, 132–152, and 155–175; these read IVFLGLIYHPMSMIAFIVVFI, VDDKIVLVLLSLVTVLALVYT, and GENVLVSLIIGLLIVGAHGAF.

It belongs to the PRA1 family. As to quaternary structure, interacts with PRA1B1, PRA1B2, PRA1B3, PRA1B4, PRA1B5 and PRA1B6. In terms of tissue distribution, expressed in hypocotyls, roots, lateral roots, columella cells, leaves and shoot apex.

It localises to the endosome membrane. May be involved in both secretory and endocytic intracellular trafficking in the endosomal/prevacuolar compartments. The chain is PRA1 family protein E (PRA1E) from Arabidopsis thaliana (Mouse-ear cress).